The following is a 38-amino-acid chain: Mu-agatoxin-Hc1b (38 aa).

4 cysteine pairs are disulfide-bonded: Cys-3/Cys-19, Cys-10/Cys-24, Cys-18/Cys-34, and Cys-26/Cys-32. Position 38 is a serine amide (Ser-38).

It belongs to the neurotoxin 07 (Beta/delta-agtx) family. 02 (aga-3) subfamily. As to expression, expressed by the venom gland.

It localises to the secreted. Functionally, insecticidal neurotoxin that induces irreversible neuromuscular blockade in house crickets (A.domesticus). Modifies presynaptic voltage-gated sodium channels (Nav), causing them to open at the normal resting potential of the nerve. This leads to spontaneous release of neurotransmitter and repetitive action potentials in motor neurons. This is Mu-agatoxin-Hc1b from Hololena curta (Funnel-web spider).